The sequence spans 468 residues: MPPANGKKGKKGGAAKAVRRIQYRPKSFKHSRFVKHAHFWSAAPEEDFDAILAEMQLADAKTAAKEATKKDAKGGKGKANGSAAATAAPEEAKQAWQAEIAAMKPIDEQFPDGKFPHGIDESPYYLKGKDGRVATDRESNEEKKALDISYEEVWQDYRRSAEAHRQVRKYVKSWIKPGMTMIEICERLETTSRRLIKEQGLEAGLAFPTGCSLNHCAAHYTPNAGDTTVLQYGDVCKIDYGIHVRGRLIDSAFTVHFDPKFDPLVEAVREATNAGIKESGIDVRLCDVGEIVEEVMTSHEVELDGKSYVVKPIRNLNGHSIAQYRIHAGKTVPIVKGGEQTKMEENEIYAIETFGSTGKGYVHDDMETSHYMKNFELADEKIPLRLQKSKGLLNLIDKNFATLAFCRRWIDRLGETKYLMALKDLCDKGIVDPYPPLCDVKGCYTAQWEHTILMRPTVKEVVSRGDDY.

The span at 63-74 (AAKEATKKDAKG) shows a compositional bias: basic and acidic residues. Residues 63–87 (AAKEATKKDAKGGKGKANGSAAATA) form a disordered region. Residue histidine 219 participates in substrate binding. Residues aspartate 239, aspartate 250, and histidine 319 each contribute to the a divalent metal cation site. Substrate is bound at residue histidine 327. A divalent metal cation contacts are provided by glutamate 352 and glutamate 449.

Belongs to the peptidase M24A family. Methionine aminopeptidase eukaryotic type 2 subfamily. Requires Co(2+) as cofactor. Zn(2+) serves as cofactor. The cofactor is Mn(2+). It depends on Fe(2+) as a cofactor.

The protein localises to the cytoplasm. The catalysed reaction is Release of N-terminal amino acids, preferentially methionine, from peptides and arylamides.. Its activity is regulated as follows. Inhibited by the fumagillin analog, TNP-470. Its function is as follows. Cotranslationally removes the N-terminal methionine from nascent proteins. The N-terminal methionine is often cleaved when the second residue in the primary sequence is small and uncharged (Met-Ala-, Cys, Gly, Pro, Ser, Thr, or Val). Required for germ cell proliferation and/or differentiation. This Caenorhabditis elegans protein is Methionine aminopeptidase 2.